The chain runs to 326 residues: Transformer-2 protein homolog (326 aa).

Disordered stretches follow at residues 1 to 114 and 179 to 326; these read MEVA…PSNV and LHGK…SYRR. The segment covering 38 to 55 has biased composition (basic and acidic residues); that stretch reads RDSRERSPPRGNSRERSP. The segment covering 56–85 has biased composition (low complexity); the sequence is PRGGSPNRGGSPNRGGSPNRGGSPNRGGSP. Positions 104–113 are enriched in polar residues; the sequence is RLANTASPSN. The 79-residue stretch at 113 to 191 folds into the RRM domain; that stretch reads NVLGVFGLAP…KSIRTDFSAT (79 aa). The span at 220–239 shows a compositional bias: gly residues; that stretch reads YGGGDRYGRGDYGGRGGGGD. Residues 240-326 are compositionally biased toward basic and acidic residues; sequence RYGRDDRGGD…DERPRDSYRR (87 aa).

This sequence belongs to the splicing factor SR family.

The protein localises to the nucleus. Its function is as follows. Sequence-specific RNA-binding protein which participates in the control of pre-mRNA splicing. The polypeptide is Transformer-2 protein homolog (tra2) (Dictyostelium discoideum (Social amoeba)).